Here is a 141-residue protein sequence, read N- to C-terminus: Regulator of ribonuclease activity B (141 aa).

A compositionally biased stretch (acidic residues) spans 119 to 132; it reads DEDFDDEDDDEDYD. The tract at residues 119-141 is disordered; sequence DEDFDDEDDDEDYDKDGFPIERH.

This sequence belongs to the RraB family. As to quaternary structure, interacts with the C-terminal region of Rne.

The protein resides in the cytoplasm. Globally modulates RNA abundance by binding to RNase E (Rne) and regulating its endonucleolytic activity. Can modulate Rne action in a substrate-dependent manner by altering the composition of the degradosome. The polypeptide is Regulator of ribonuclease activity B (Shewanella amazonensis (strain ATCC BAA-1098 / SB2B)).